Reading from the N-terminus, the 378-residue chain is Carbazole 1,9a-dioxygenase, terminal oxygenase component CarAa (378 aa).

The Rieske domain occupies 29–135; sequence WYPVRLASEI…VEEAKGLIFV (107 aa). Residues Cys-69, His-71, Cys-90, and His-93 each coordinate [2Fe-2S] cluster.

Homotrimer. Carbazole 1,9a-dioxygenase complex consists of a terminal oxygenase component CarAa, a ferredoxin reductase component fdr and a ferredoxin component CarAc. [2Fe-2S] cluster serves as cofactor.

It carries out the reaction 9H-carbazole + NADH + O2 + H(+) = 2'-aminobiphenyl-2,3-diol + NAD(+). The catalysed reaction is 9H-carbazole + NADPH + O2 + H(+) = 2'-aminobiphenyl-2,3-diol + NADP(+). Functionally, part of the multicomponent carbazole 1,9a-dioxygenase (CARDO), that converts carbazole (CAR) into 2-aminobiphenyl-2,3-diol. Catalyzes the dioxygenation at the angular (C-9a) and adjacent (C-1) positions of carbazole to yield a highly unstable cis-hydrodiol intermediate which is spontaneously converted to 2-aminobiphenyl-2,3-diol. In Sphingomonas sp, this protein is Carbazole 1,9a-dioxygenase, terminal oxygenase component CarAa (carAa).